A 462-amino-acid polypeptide reads, in one-letter code: Nuclear distribution protein PAC1 (462 aa).

The LisH domain occupies 9-41; sequence QAEELHKAIIAYLGVINAPKTAAAFREEVNFSA. The stretch at 60–87 forms a coiled coil; that stretch reads TSVVRLQKKVLELEQRNQSLQSELDSTT. Positions 78-99 are enriched in polar residues; it reads SLQSELDSTTPTSLLRRNQDPS. Residues 78-103 are disordered; the sequence is SLQSELDSTTPTSLLRRNQDPSSWLP. 8 WD repeats span residues 113–154, 156–196, 200–247, 250–289, 292–352, 354–393, 398–445, and 447–462; these read SHRS…RTVK, HTKG…KNIR, GHDH…CVKT, GHADWVRDVSPSFDGRWLLSAGNDQTARLWDASSGEAKCT, GHEH…IKTL, GHDNWVRALIFHPGGKYLLSASDDKTIRCWDLTQEGRCVK, AHSH…AGIR, and VIATGCVDLNVRIFAS. Residues 414–434 are disordered; it reads KDAPTNGDAPNGTTANGASKK.

It belongs to the WD repeat LIS1/nudF family. In terms of assembly, self-associates. Interacts with NDL1 and dynein.

It localises to the cytoplasm. It is found in the cytoskeleton. The protein localises to the spindle pole. Functionally, positively regulates the activity of the minus-end directed microtubule motor protein dynein. May enhance dynein-mediated microtubule sliding by targeting dynein to the microtubule plus end. Required for nuclear migration during vegetative growth as well as development. Required for retrograde early endosome (EE) transport from the hyphal tip. Required for localization of dynein to the mitotic spindle poles. Recruits additional proteins to the dynein complex at SPBs. The chain is Nuclear distribution protein PAC1 from Phaeosphaeria nodorum (strain SN15 / ATCC MYA-4574 / FGSC 10173) (Glume blotch fungus).